The primary structure comprises 317 residues: 17-beta-hydroxysteroid dehydrogenase type 6 (317 aa).

An N-terminal signal peptide occupies residues 1–17 (MWFYLVTLVGLYHLLRW). 33–57 (FITGCDSGFGNLLARQLDRRGMRVL) is an NAD(+) binding site. Residues asparagine 71 and asparagine 161 are each glycosylated (N-linked (GlcNAc...) asparagine). Serine 164 contacts substrate. Tyrosine 176 acts as the Proton acceptor in catalysis.

Belongs to the short-chain dehydrogenases/reductases (SDR) family. In terms of tissue distribution, detected in liver.

It is found in the microsome membrane. It localises to the early endosome membrane. The enzyme catalyses all-trans-retinol--[retinol-binding protein] + NAD(+) = all-trans-retinal--[retinol-binding protein] + NADH + H(+). It carries out the reaction all-trans-retinol + NAD(+) = all-trans-retinal + NADH + H(+). It catalyses the reaction androsterone + NAD(+) = 5alpha-androstan-3,17-dione + NADH + H(+). The catalysed reaction is testosterone + NAD(+) = androst-4-ene-3,17-dione + NADH + H(+). The enzyme catalyses 5alpha-androstane-3alpha,17beta-diol + NAD(+) = 17beta-hydroxy-5alpha-androstan-3-one + NADH + H(+). It carries out the reaction 17beta-estradiol + NAD(+) = estrone + NADH + H(+). It catalyses the reaction 17beta-estradiol + NADP(+) = estrone + NADPH + H(+). The catalysed reaction is 3alpha-hydroxy-5alpha-pregnan-20-one + NAD(+) = 5alpha-pregnane-3,20-dione + NADH + H(+). The enzyme catalyses 5alpha-androstane-3beta,17beta-diol + NAD(+) = 17beta-hydroxy-5alpha-androstan-3-one + NADH + H(+). It carries out the reaction 3beta-hydroxy-5alpha-androstan-17-one + NAD(+) = 5alpha-androstan-3,17-dione + NADH + H(+). Inhibited by carbenoxolone and phenyl arsenoxide. In terms of biological role, NAD-dependent oxidoreductase with broad substrate specificity that shows both oxidative and reductive activity (in vitro). Has 17-beta-hydroxysteroid dehydrogenase activity towards various steroids (in vitro). Converts 5-alpha-androstan-3-alpha,17-beta-diol to androsterone and estradiol to estrone (in vitro). Has 3-alpha-hydroxysteroid dehydrogenase activity towards androsterone (in vitro). Has retinol dehydrogenase activity towards all-trans-retinol (in vitro). The protein is 17-beta-hydroxysteroid dehydrogenase type 6 (Hsd17b6) of Mus musculus (Mouse).